We begin with the raw amino-acid sequence, 532 residues long: Undecaprenyl-phosphate glucose phosphotransferase (532 aa).

The next 5 helical transmembrane spans lie at 81–101, 110–130, 155–175, 183–203, and 344–364; these read QVVV…CIAW, ELSG…FLFP, VAFG…PFGV, WLTF…YILH, and TASV…ALAI.

This sequence belongs to the bacterial sugar transferase family.

Its subcellular location is the membrane. It carries out the reaction di-trans,octa-cis-undecaprenyl phosphate + UDP-alpha-D-glucose = alpha-D-glucosyl di-trans,octa-cis-undecaprenyl diphosphate + UMP. In terms of biological role, involved in the biosynthesis of the exopolysaccharide acetan, a water-soluble polysaccharide involved in production of bacterial cellulose (BC). The polypeptide is Undecaprenyl-phosphate glucose phosphotransferase (aceA) (Komagataeibacter xylinus (Gluconacetobacter xylinus)).